Here is a 469-residue protein sequence, read N- to C-terminus: uncharacterized protein (469 aa).

Basic and acidic residues predominate over residues 152–161 (VREGKEEKKG). Residues 152-174 (VREGKEEKKGGPPGRGPPGWRRR) form a disordered region. Coiled coils occupy residues 346 to 375 (KAALEQNDRLRSELEMEVALLQSAKERSES) and 423 to 453 (SDITENRIKSIEHEAIQLETENMILKKKIKG).

This is an uncharacterized protein from Homo sapiens (Human).